We begin with the raw amino-acid sequence, 37 residues long: Large ribosomal subunit protein bL36 (37 aa).

Belongs to the bacterial ribosomal protein bL36 family.

The polypeptide is Large ribosomal subunit protein bL36 (Salinispora tropica (strain ATCC BAA-916 / DSM 44818 / JCM 13857 / NBRC 105044 / CNB-440)).